The primary structure comprises 167 residues: Bacterial non-heme ferritin (167 aa).

Positions 1 to 145 constitute a Ferritin-like diiron domain; the sequence is MLSKDIIKLL…DILDKIELIG (145 aa). Residues E17, E50, H53, E94, and Q127 each coordinate Fe cation.

The protein belongs to the ferritin family. Prokaryotic subfamily. In terms of assembly, homooligomer of 24 subunits that assemble into a spherical protein shell (12 +/- 1 nM diameter) that can sequester at least 2000 iron atoms.

It localises to the cytoplasm. It carries out the reaction 4 Fe(2+) + O2 + 6 H2O = 4 iron(III) oxide-hydroxide + 12 H(+). In terms of biological role, iron-storage protein. This Helicobacter pylori (strain ATCC 700392 / 26695) (Campylobacter pylori) protein is Bacterial non-heme ferritin (ftnA).